The primary structure comprises 338 residues: POU domain, class 4, transcription factor 3 (338 aa).

Residues 56-65 (RAEALAAVDI) carry the POU-IV box motif. One can recognise a POU-specific domain in the interval 179 to 256 (DVESDPRELE…VLQAWLEEAE (78 aa)). The segment at residues 274 to 333 (RKRKRTSIAAPEKRSLEAYFAIQPRPSSEKIAAIAEKLDLKKNVVRVWFCNQRQKQKRMK) is a DNA-binding region (homeobox).

The protein belongs to the POU transcription factor family. Class-4 subfamily. In terms of assembly, interacts with ISL1. As to expression, brain. Seems to be specific to the retina.

It is found in the nucleus. Its subcellular location is the cytoplasm. In terms of biological role, acts as a transcriptional activator. Acts by binding to sequences related to the consensus octamer motif 5'-ATGCAAAT-3' in the regulatory regions of its target genes. Involved in the auditory system development, required for terminal differentiation of hair cells in the inner ear. The protein is POU domain, class 4, transcription factor 3 (POU4F3) of Homo sapiens (Human).